We begin with the raw amino-acid sequence, 153 residues long: CRIB domain-containing protein RIC4 (153 aa).

One can recognise a CRIB domain in the interval 99–112 (IGVPTNVKHVSHIG).

In terms of assembly, interacts with ARAC4/ROP2 and ARAC11/ROP1. In terms of tissue distribution, expressed in roots, leaves, stems, flowers, siliques and pollen.

It localises to the cell membrane. Functionally, functions as a downstream effector of Rho-related GTP binding proteins of the 'Rho of Plants' (ROPs) family. Participates in the propagation of ROP GTPase signals in specific cellular responses. Required for actin cortical microfilament assembly. Activated by ARAC4/ROP2 to promote the assembly of cortical actin microfilaments required for lobe formation and lateral expansion of pavement cells. Interaction with, and activation by ARAC4/ROP2 is inhibited by RIC1. Functions as a downstream effector of ARAC11/ROP1 to promote the assembly of apical F-actin associated with vesicle accumulation in the tip of the growing pollen tube. Counteracts the ARAC11/ROP1-RIC3 pathway, which activates calcium signaling that leads to apical F-actin disassembly associated with exocytosis, to control actin dynamics and pollen tube apical growth. Downstream of ARAC11/ROP1, is involved in the growth responses to the root-colonizing endophytic fungus P.indica. The chain is CRIB domain-containing protein RIC4 (RIC4) from Arabidopsis thaliana (Mouse-ear cress).